The following is a 493-amino-acid chain: Glycerol kinase (493 aa).

Thr11 lines the ADP pocket. ATP-binding residues include Thr11, Thr12, and Ser13. Thr11 serves as a coordination point for sn-glycerol 3-phosphate. Residue Arg15 participates in ADP binding. Arg80, Glu81, Tyr132, and Asp241 together coordinate sn-glycerol 3-phosphate. Glycerol is bound by residues Arg80, Glu81, Tyr132, Asp241, and Gln242. Residues Thr263 and Gly306 each contribute to the ADP site. ATP-binding residues include Thr263, Gly306, Gln310, and Gly408. Residue Gly408 participates in ADP binding.

The protein belongs to the FGGY kinase family.

It carries out the reaction glycerol + ATP = sn-glycerol 3-phosphate + ADP + H(+). The protein operates within polyol metabolism; glycerol degradation via glycerol kinase pathway; sn-glycerol 3-phosphate from glycerol: step 1/1. With respect to regulation, inhibited by fructose 1,6-bisphosphate (FBP). Key enzyme in the regulation of glycerol uptake and metabolism. Catalyzes the phosphorylation of glycerol to yield sn-glycerol 3-phosphate. In Cereibacter sphaeroides (strain ATCC 17029 / ATH 2.4.9) (Rhodobacter sphaeroides), this protein is Glycerol kinase.